A 311-amino-acid polypeptide reads, in one-letter code: Probable manganese-dependent inorganic pyrophosphatase (311 aa).

Mn(2+)-binding residues include His-9, Asp-13, Asp-15, Asp-77, His-99, and Asp-151.

It belongs to the PPase class C family. Mn(2+) is required as a cofactor.

The protein localises to the cytoplasm. The enzyme catalyses diphosphate + H2O = 2 phosphate + H(+). This Streptococcus equi subsp. equi (strain 4047) protein is Probable manganese-dependent inorganic pyrophosphatase.